A 95-amino-acid polypeptide reads, in one-letter code: Co-chaperonin GroES (95 aa).

Belongs to the GroES chaperonin family. As to quaternary structure, heptamer of 7 subunits arranged in a ring. Interacts with the chaperonin GroEL.

It is found in the cytoplasm. Its function is as follows. Together with the chaperonin GroEL, plays an essential role in assisting protein folding. The GroEL-GroES system forms a nano-cage that allows encapsulation of the non-native substrate proteins and provides a physical environment optimized to promote and accelerate protein folding. GroES binds to the apical surface of the GroEL ring, thereby capping the opening of the GroEL channel. The protein is Co-chaperonin GroES of Cereibacter sphaeroides (strain ATCC 17025 / ATH 2.4.3) (Rhodobacter sphaeroides).